A 371-amino-acid polypeptide reads, in one-letter code: DNA replication and repair protein RecF (371 aa).

Residue 30–37 coordinates ATP; it reads GANAQGKT.

Belongs to the RecF family.

It is found in the cytoplasm. Functionally, the RecF protein is involved in DNA metabolism; it is required for DNA replication and normal SOS inducibility. RecF binds preferentially to single-stranded, linear DNA. It also seems to bind ATP. The protein is DNA replication and repair protein RecF of Lacticaseibacillus casei (strain BL23) (Lactobacillus casei).